Consider the following 59-residue polypeptide: uncharacterized protein (59 aa).

Residues 27-59 form a disordered region; that stretch reads SCFQNRPPEPASFQNLRPEPASLQNLRTEPTSF. A compositionally biased stretch (polar residues) spans 48-59; sequence SLQNLRTEPTSF.

This is an uncharacterized protein from Homo sapiens (Human).